A 580-amino-acid polypeptide reads, in one-letter code: DNA ligase 1 (580 aa).

Glutamate 245 lines the ATP pocket. Catalysis depends on lysine 247, which acts as the N6-AMP-lysine intermediate. Residues arginine 252, arginine 267, glutamate 297, phenylalanine 343, arginine 420, and lysine 426 each coordinate ATP.

This sequence belongs to the ATP-dependent DNA ligase family. Mg(2+) serves as cofactor.

It carries out the reaction ATP + (deoxyribonucleotide)n-3'-hydroxyl + 5'-phospho-(deoxyribonucleotide)m = (deoxyribonucleotide)n+m + AMP + diphosphate.. In terms of biological role, DNA ligase that seals nicks in double-stranded DNA during DNA replication, DNA recombination and DNA repair. This chain is DNA ligase 1, found in Methanosarcina acetivorans (strain ATCC 35395 / DSM 2834 / JCM 12185 / C2A).